A 154-amino-acid chain; its full sequence is Major allergen Dau c 1 (154 aa).

Belongs to the BetVI family. In terms of assembly, homodimer.

The chain is Major allergen Dau c 1 from Daucus carota (Wild carrot).